Reading from the N-terminus, the 84-residue chain is MSYYGSYYRGLGYGCGGFGGLGYGYGCGCGSFRRLGYGCGFGGNGYGYCRPSCYGGYGFSILLKSYPEDTISEVIRRSFNLTKY.

This sequence belongs to the KRTAP type 19 family. Interacts with hair keratins.

Its function is as follows. In the hair cortex, hair keratin intermediate filaments are embedded in an interfilamentous matrix, consisting of hair keratin-associated proteins (KRTAP), which are essential for the formation of a rigid and resistant hair shaft through their extensive disulfide bond cross-linking with abundant cysteine residues of hair keratins. The matrix proteins include the high-sulfur and high-glycine-tyrosine keratins. The chain is Keratin-associated protein 19-4 (KRTAP19-4) from Homo sapiens (Human).